Consider the following 257-residue polypeptide: Phosphonates import ATP-binding protein PhnC (257 aa).

Residues 4–248 (IEFKNVSKVY…VFSEIYGRTI (245 aa)) enclose the ABC transporter domain. 37-44 (GLSGAGKS) provides a ligand contact to ATP.

It belongs to the ABC transporter superfamily. Phosphonates importer (TC 3.A.1.9.1) family. In terms of assembly, the complex is composed of two ATP-binding proteins (PhnC), two transmembrane proteins (PhnE) and a solute-binding protein (PhnD).

It localises to the cell membrane. It catalyses the reaction phosphonate(out) + ATP + H2O = phosphonate(in) + ADP + phosphate + H(+). Part of the ABC transporter complex PhnCDE involved in phosphonates import. Responsible for energy coupling to the transport system. This chain is Phosphonates import ATP-binding protein PhnC, found in Staphylococcus aureus (strain COL).